Reading from the N-terminus, the 322-residue chain is tRNA-modifying protein YgfZ (322 aa).

A folate-binding site is contributed by tryptophan 182.

It belongs to the tRNA-modifying YgfZ family.

The protein localises to the cytoplasm. Its function is as follows. Folate-binding protein involved in regulating the level of ATP-DnaA and in the modification of some tRNAs. It is probably a key factor in regulatory networks that act via tRNA modification, such as initiation of chromosomal replication. This chain is tRNA-modifying protein YgfZ, found in Vibrio campbellii (strain ATCC BAA-1116).